The sequence spans 267 residues: Phosphate import ATP-binding protein PstB (267 aa).

In terms of domain architecture, ABC transporter spans Val-21 to Ile-262. ATP is bound at residue Gly-53–Ser-60.

This sequence belongs to the ABC transporter superfamily. Phosphate importer (TC 3.A.1.7) family. The complex is composed of two ATP-binding proteins (PstB), two transmembrane proteins (PstC and PstA) and a solute-binding protein (PstS).

The protein resides in the cell inner membrane. It carries out the reaction phosphate(out) + ATP + H2O = ADP + 2 phosphate(in) + H(+). Its function is as follows. Part of the ABC transporter complex PstSACB involved in phosphate import. Responsible for energy coupling to the transport system. This chain is Phosphate import ATP-binding protein PstB, found in Xanthomonas euvesicatoria pv. vesicatoria (strain 85-10) (Xanthomonas campestris pv. vesicatoria).